The chain runs to 496 residues: Cytochrome P450 71D180 (496 aa).

Residues 1-21 traverse the membrane as a helical; Signal-anchor for type II membrane protein segment; it reads MDISISWVVIIVFVLSYLILM. Position 435 (Cys435) interacts with heme. The interval 471-496 is disordered; the sequence is MSETPGLSGPRKNPLIMIPTIHNPTS.

The protein belongs to the cytochrome P450 family. Heme serves as cofactor.

The protein localises to the membrane. It catalyses the reaction gamma-terpinene + 2 reduced [NADPH--hemoprotein reductase] + 2 O2 = carvacrol + 2 oxidized [NADPH--hemoprotein reductase] + 3 H2O + 2 H(+). The enzyme catalyses (4S)-limonene + reduced [NADPH--hemoprotein reductase] + O2 = (1S,5R)-carveol + oxidized [NADPH--hemoprotein reductase] + H2O + H(+). It carries out the reaction (4R)-limonene + reduced [NADPH--hemoprotein reductase] + O2 = (1R,5S)-carveol + oxidized [NADPH--hemoprotein reductase] + H2O + H(+). Its pathway is secondary metabolite biosynthesis; terpenoid biosynthesis. Its function is as follows. Involved in the biosynthesis of phenolic monoterpenes natural products thymol and carvacrol which have a broad range of biological activities acting as antimicrobial compounds, insecticides, antioxidants and pharmaceutical agents. Catalyzes the C2-hydroxylation of gamma-terpinene to produce carvacrol. Mediates also the C6-hydroxylation of (4S)-limonene and (4R)-limonene to form carveol. This is Cytochrome P450 71D180 from Origanum majorana (Sweet marjoram).